The sequence spans 347 residues: Quinolinate synthase (347 aa).

Residues H47 and S68 each contribute to the iminosuccinate site. [4Fe-4S] cluster is bound at residue C113. Residues 139–141 and S156 each bind iminosuccinate; that span reads YAN. C200 is a binding site for [4Fe-4S] cluster. Residues 226-228 and T243 contribute to the iminosuccinate site; that span reads HPE. A [4Fe-4S] cluster-binding site is contributed by C297.

Belongs to the quinolinate synthase family. Type 1 subfamily. [4Fe-4S] cluster serves as cofactor.

The protein resides in the cytoplasm. The catalysed reaction is iminosuccinate + dihydroxyacetone phosphate = quinolinate + phosphate + 2 H2O + H(+). Its pathway is cofactor biosynthesis; NAD(+) biosynthesis; quinolinate from iminoaspartate: step 1/1. In terms of biological role, catalyzes the condensation of iminoaspartate with dihydroxyacetone phosphate to form quinolinate. The protein is Quinolinate synthase of Escherichia coli O127:H6 (strain E2348/69 / EPEC).